A 360-amino-acid polypeptide reads, in one-letter code: Histidinol-phosphate aminotransferase (360 aa).

N6-(pyridoxal phosphate)lysine is present on K213.

This sequence belongs to the class-II pyridoxal-phosphate-dependent aminotransferase family. Histidinol-phosphate aminotransferase subfamily. As to quaternary structure, homodimer. The cofactor is pyridoxal 5'-phosphate.

The enzyme catalyses L-histidinol phosphate + 2-oxoglutarate = 3-(imidazol-4-yl)-2-oxopropyl phosphate + L-glutamate. Its pathway is amino-acid biosynthesis; L-histidine biosynthesis; L-histidine from 5-phospho-alpha-D-ribose 1-diphosphate: step 7/9. This Baumannia cicadellinicola subsp. Homalodisca coagulata protein is Histidinol-phosphate aminotransferase.